The chain runs to 403 residues: MAIFREFDVNDHHDRSLEDRRRHRQLVEKSIKDNLADIISEESIIGQSKNKKVKIPIKGIKEYQFIYGDNSSGVGSGDGSQKKGDRIGKAIKDRDGKGNQGAGNQEGEDMYEIEVTIEDVLDYLMEDLELPLMDKKKFSQILSNNSPKKSGYQRKGINPRLAKKRTVVEKLKRQQGTKRALREIHGELESDPKNKLPENTTIKSRFPFKQDDLRYFRVKRKPKLELNAAIICVMDTSGSMDSTRKFLARSFFFVLYRFIKMKYNNVEVKFISHSTSAKVVTENEFFHKVESGGTYISSGLKKALEVIEENYNPAYWNVYTFYVSDGDNWSEDNSLALKCAKDLCKVCNLFSYAEIIPSPYGSSIKHIFQNKITDNNFTVVTIHEKQDLWKSLKKILNKELEER.

The segment at 71–109 is disordered; the sequence is SSGVGSGDGSQKKGDRIGKAIKDRDGKGNQGAGNQEGED. Basic and acidic residues predominate over residues 80-97; that stretch reads SQKKGDRIGKAIKDRDGK.

This sequence belongs to the UPF0229 family.

This Clostridium kluyveri (strain NBRC 12016) protein is UPF0229 protein CKR_0568.